A 621-amino-acid polypeptide reads, in one-letter code: Type 2 DNA topoisomerase 6 subunit B (621 aa).

ATP is bound by residues asparagine 48, aspartate 80, 101–102 (SR), 111–118 (GQQGIGIS), and lysine 435.

The protein belongs to the TOP6B family. As to quaternary structure, homodimer. Heterotetramer of two Top6A and two Top6B chains.

It carries out the reaction ATP-dependent breakage, passage and rejoining of double-stranded DNA.. Relaxes both positive and negative superturns and exhibits a strong decatenase activity. This Methanosarcina barkeri (strain Fusaro / DSM 804) protein is Type 2 DNA topoisomerase 6 subunit B.